The sequence spans 592 residues: MAPPVSERGLKSVVWRKIKTAVFDDCRKEGEWKIMLLDEFTTKLLSSCCKMTDLLEEGITVIENIYKNREPVRQMKALYFISPTPKSVDCFLRDFGSKSEKKYKAAYIYFTDFCPDSLFNKIKASCSKSIRRCKEINISFIPQESQVYTLDVPDAFYYCYSPDPSNASRKEVVMEAMAEQIVTVCATLDENPGVRYKSKPLDNASKLAQLVEKKLEDYYKIDEKGLIKGKTQSQLLIIDRGFDPVSTVLHELTFQAMAYDLLPIENDTYKYKTDGKEKEAVLEEDDDLWVRVRHRHIAVVLEEIPKLMKEISSTKKATEGKTSLSALTQLMKKMPHFRKQISKQVVHLNLAEDCMNKFKLNIEKLCKTEQDLALGTDAEGQRVKDSMLVLLPVLLNKNHDNCDKIRAVLLYIFGINGTTEENLDRLIHNVKIEDDSDMIRNWSHLGVPIVPPSQQAKPLRKDRSAEETFQLSRWTPFIKDIMEDAIDNRLDSKEWPYCSRCPAVWNGSGAVSARQKPRTNYLELDRKNGSRLIIFVIGGITYSEMRCAYEVSQAHKSCEVIIGSTHILTPRKLLDDIKMLNKSKDKVSFKDE.

A mediates interaction with DOC2B region spans residues 1–255; the sequence is MAPPVSERGL…STVLHELTFQ (255 aa).

Belongs to the STXBP/unc-18/SEC1 family. Interacts with STX4. Interacts with DOC2B; the interaction is direct, occurs at the cell membrane, excludes interaction with STX4 and regulates glucose-stimulated insulin secretion. Post-translationally, phosphorylated by PKC in platelets in response to thrombin stimulation; phosphorylation inhibits binding to STX4. As to expression, ubiquitously expressed in all tissues tested.

The protein resides in the cytoplasm. It localises to the cytosol. Its subcellular location is the cell membrane. Functionally, together with STX4 and VAMP2, may play a role in insulin-dependent movement of GLUT4 and in docking/fusion of intracellular GLUT4-containing vesicles with the cell surface in adipocytes. The sequence is that of Syntaxin-binding protein 3 (Stxbp3) from Mus musculus (Mouse).